The following is a 182-amino-acid chain: Nudix hydrolase 17, mitochondrial (182 aa).

Residues 1–26 constitute a mitochondrion transit peptide; that stretch reads MGVEKMVCLASRTGRQFQRYNKGRRQ. One can recognise a Nudix hydrolase domain in the interval 27–158; it reads VVGCVPYRFK…WMKEALDVLV (132 aa). A Nudix box motif is present at residues 65–86; sequence GGWELDESVEEAASRECLEEAG. The Mg(2+) site is built by E80 and E84.

It belongs to the Nudix hydrolase family. Mg(2+) is required as a cofactor. The cofactor is Mn(2+). As to expression, expressed in roots, leaves, stems and inflorescences.

Its subcellular location is the mitochondrion. In terms of biological role, probably mediates the hydrolysis of some nucleoside diphosphate derivatives. The sequence is that of Nudix hydrolase 17, mitochondrial (NUDT17) from Arabidopsis thaliana (Mouse-ear cress).